A 343-amino-acid chain; its full sequence is S-adenosylmethionine:tRNA ribosyltransferase-isomerase (343 aa).

It belongs to the QueA family. In terms of assembly, monomer.

It is found in the cytoplasm. The catalysed reaction is 7-aminomethyl-7-carbaguanosine(34) in tRNA + S-adenosyl-L-methionine = epoxyqueuosine(34) in tRNA + adenine + L-methionine + 2 H(+). It participates in tRNA modification; tRNA-queuosine biosynthesis. In terms of biological role, transfers and isomerizes the ribose moiety from AdoMet to the 7-aminomethyl group of 7-deazaguanine (preQ1-tRNA) to give epoxyqueuosine (oQ-tRNA). The protein is S-adenosylmethionine:tRNA ribosyltransferase-isomerase of Geotalea uraniireducens (strain Rf4) (Geobacter uraniireducens).